We begin with the raw amino-acid sequence, 166 residues long: NAD(P)H-quinone oxidoreductase subunit I, chloroplastic (166 aa).

4Fe-4S ferredoxin-type domains are found at residues 55–84 (GRIHFEFDKCIACEVCVRVCPIDLPVVDWK) and 95–124 (LNYSIDFGICIFCGNCVEYCPTNCLSMTEE). Cys-64, Cys-67, Cys-70, Cys-74, Cys-104, Cys-107, Cys-110, and Cys-114 together coordinate [4Fe-4S] cluster.

Belongs to the complex I 23 kDa subunit family. In terms of assembly, NDH is composed of at least 16 different subunits, 5 of which are encoded in the nucleus. [4Fe-4S] cluster serves as cofactor.

Its subcellular location is the plastid. The protein localises to the chloroplast thylakoid membrane. It catalyses the reaction a plastoquinone + NADH + (n+1) H(+)(in) = a plastoquinol + NAD(+) + n H(+)(out). The catalysed reaction is a plastoquinone + NADPH + (n+1) H(+)(in) = a plastoquinol + NADP(+) + n H(+)(out). Its function is as follows. NDH shuttles electrons from NAD(P)H:plastoquinone, via FMN and iron-sulfur (Fe-S) centers, to quinones in the photosynthetic chain and possibly in a chloroplast respiratory chain. The immediate electron acceptor for the enzyme in this species is believed to be plastoquinone. Couples the redox reaction to proton translocation, and thus conserves the redox energy in a proton gradient. This Laphamia lindheimeri (Lindheimer's rockdaisy) protein is NAD(P)H-quinone oxidoreductase subunit I, chloroplastic.